We begin with the raw amino-acid sequence, 591 residues long: L-fucose isomerase (591 aa).

Catalysis depends on proton acceptor residues Glu337 and Asp361. Positions 337, 361, and 528 each coordinate Mn(2+).

The protein belongs to the L-fucose isomerase family. In terms of assembly, homohexamer. Mn(2+) is required as a cofactor.

It localises to the cytoplasm. It carries out the reaction L-fucose = L-fuculose. The protein operates within carbohydrate degradation; L-fucose degradation; L-lactaldehyde and glycerone phosphate from L-fucose: step 1/3. Converts the aldose L-fucose into the corresponding ketose L-fuculose. The polypeptide is L-fucose isomerase (Escherichia coli O139:H28 (strain E24377A / ETEC)).